Here is a 1036-residue protein sequence, read N- to C-terminus: Vacuolar basic amino acid transporter VSB1 (1036 aa).

Topologically, residues 1 to 213 (MGRTIRRRRS…SKFAHYLPAA (213 aa)) are vacuolar. Residues S42 and S127 each carry the phosphoserine modification. T130 carries the phosphothreonine modification. Phosphoserine occurs at positions 140, 144, 149, 152, and 153. The chain crosses the membrane as a helical span at residues 214 to 234 (VLGLLLNILDALSYGMIIFPI). Residues 235 to 236 (TE) are Cytoplasmic-facing. The helical transmembrane segment at 237 to 257 (PVFSHLGPTGISMFYISTIIS) threads the bilayer. Residues 258–269 (QAVYSGGWSSFP) are Vacuolar-facing. Residues 270 to 290 (SGIGSEMIEITPFYHTMALAI) form a helical membrane-spanning segment. Residues 291-300 (KEALAGNDDE) lie on the Cytoplasmic side of the membrane. The helical transmembrane segment at 301-321 (IITTTIFCYVISSMLTGVVFY) threads the bilayer. The Vacuolar portion of the chain corresponds to 322 to 338 (ALGKLRLGKIVGFFPRH). The helical transmembrane segment at 339–359 (ILIGCIGGVGYFLIITGIEVT) threads the bilayer. Over 360-375 (TRVAKFEYSWPFFSGL) the chain is Cytoplasmic. Residues 376–396 (FTDYDTLAKWLLPVLLTVVLI) traverse the membrane as a helical segment. At 397–405 (GTQRYFKNS) the chain is on the vacuolar side. Residues 406-426 (LVLPSFYILTLVLFHFIVAII) traverse the membrane as a helical segment. The Cytoplasmic segment spans residues 427-473 (PTLSLDALRQAGWIFPIANSDSKWYDHYRLFNVHKVHWSLVLQQIPT). A helical membrane pass occupies residues 474–494 (MMALTFFGILHVPINVPALAM). Over 495-515 (SLQMDKYDVDRELIAHGYSNF) the chain is Vacuolar. A helical membrane pass occupies residues 516-536 (FSGLLGSVQNYLVYTNSVLFI). At 537–546 (RAGADSPFAG) the chain is on the cytoplasmic side. Residues 547–567 (FLLIALTICIMIIGPVIISFI) form a helical membrane-spanning segment. A topological domain (vacuolar) is located at residue P568. A helical transmembrane segment spans residues 569 to 589 (ICIVGSLIFLLGYELLVEALV). At 590 to 604 (DTWNKLNRFEYLTVV) the chain is on the cytoplasmic side. Residues 605–625 (IIVFTMGIFDFVLGIIVGILI) form a helical membrane-spanning segment. Residues 626-664 (ACFSFLVDSTKLQTINGEYNGNVARSTVYRDYVQTKFLD) lie on the Vacuolar side of the membrane. An STAS domain is found at 660-781 (TKFLDGIGEQ…ADLNSALEWC (122 aa)). Residues 665-685 (GIGEQIYVLKLQNLLFFGTII) form a helical membrane-spanning segment. Over 686-1036 (SIEEKIERLL…ELLGYTLVSA (351 aa)) the chain is Cytoplasmic. Phosphoserine is present on S842. The residue at position 847 (T847) is a Phosphothreonine.

It is found in the vacuole membrane. In terms of biological role, amino acid transporter involved in vacuolar uptake of basic amino acids for storage during nitrogen replete condititions. May function as an amino acid/proton antiporter. In Saccharomyces cerevisiae (strain ATCC 204508 / S288c) (Baker's yeast), this protein is Vacuolar basic amino acid transporter VSB1.